Consider the following 211-residue polypeptide: Octanoyltransferase (211 aa).

The 176-residue stretch at 32–207 (PCTYDEIWFV…ELSKFLEIFI (176 aa)) folds into the BPL/LPL catalytic domain. Residues 71-78 (RGGQITYH), 138-140 (SLG), and 151-153 (GLA) each bind substrate. The Acyl-thioester intermediate role is filled by Cys169.

The protein belongs to the LipB family.

The protein localises to the cytoplasm. It carries out the reaction octanoyl-[ACP] + L-lysyl-[protein] = N(6)-octanoyl-L-lysyl-[protein] + holo-[ACP] + H(+). Its pathway is protein modification; protein lipoylation via endogenous pathway; protein N(6)-(lipoyl)lysine from octanoyl-[acyl-carrier-protein]: step 1/2. Catalyzes the transfer of endogenously produced octanoic acid from octanoyl-acyl-carrier-protein onto the lipoyl domains of lipoate-dependent enzymes. Lipoyl-ACP can also act as a substrate although octanoyl-ACP is likely to be the physiological substrate. This Buchnera aphidicola subsp. Acyrthosiphon pisum (strain APS) (Acyrthosiphon pisum symbiotic bacterium) protein is Octanoyltransferase.